We begin with the raw amino-acid sequence, 466 residues long: Glutamate--tRNA ligase 2 (466 aa).

Residues 11–21 (PSPTGFLHIGG) carry the 'HIGH' region motif. A 'KMSKS' region motif is present at residues 239-243 (KLSKR). Lys-242 contributes to the ATP binding site.

It belongs to the class-I aminoacyl-tRNA synthetase family. Glutamate--tRNA ligase type 1 subfamily. In terms of assembly, monomer.

It is found in the cytoplasm. The enzyme catalyses tRNA(Glu) + L-glutamate + ATP = L-glutamyl-tRNA(Glu) + AMP + diphosphate. Its function is as follows. Catalyzes the attachment of glutamate to tRNA(Glu) in a two-step reaction: glutamate is first activated by ATP to form Glu-AMP and then transferred to the acceptor end of tRNA(Glu). This chain is Glutamate--tRNA ligase 2, found in Roseobacter denitrificans (strain ATCC 33942 / OCh 114) (Erythrobacter sp. (strain OCh 114)).